Here is a 269-residue protein sequence, read N- to C-terminus: Hydroxyethylthiazole kinase (269 aa).

Met43 contributes to the substrate binding site. Residues Arg119 and Ser165 each coordinate ATP. Residue Ala192 participates in substrate binding.

This sequence belongs to the Thz kinase family. The cofactor is Mg(2+).

It catalyses the reaction 5-(2-hydroxyethyl)-4-methylthiazole + ATP = 4-methyl-5-(2-phosphooxyethyl)-thiazole + ADP + H(+). It participates in cofactor biosynthesis; thiamine diphosphate biosynthesis; 4-methyl-5-(2-phosphoethyl)-thiazole from 5-(2-hydroxyethyl)-4-methylthiazole: step 1/1. Functionally, catalyzes the phosphorylation of the hydroxyl group of 4-methyl-5-beta-hydroxyethylthiazole (THZ). The sequence is that of Hydroxyethylthiazole kinase from Glaesserella parasuis serovar 5 (strain SH0165) (Haemophilus parasuis).